Consider the following 535-residue polypeptide: Dual specificity calcium/calmodulin-dependent 3',5'-cyclic nucleotide phosphodiesterase 1A (535 aa).

Calmodulin-binding stretches follow at residues 24–44 (TEKMWQRLKGILRCLVKQLER) and 114–137 (EKPKFRSIVHAVQAGIFVERMYRK). The PDEase domain occupies 142-522 (VGLAYPAAVI…ERWKELAAQE (381 aa)). Catalysis depends on H219, which acts as the Proton donor. 4 residues coordinate Zn(2+): H223, H259, D260, and D366. Position 260 (D260) interacts with Mg(2+).

It belongs to the cyclic nucleotide phosphodiesterase family. PDE1 subfamily. As to quaternary structure, homodimer. Interacts with YWHAZ. It depends on Zn(2+) as a cofactor. The cofactor is Mg(2+). In terms of tissue distribution, several tissues, including brain, kidney, testes and heart.

The enzyme catalyses a nucleoside 3',5'-cyclic phosphate + H2O = a nucleoside 5'-phosphate + H(+). It catalyses the reaction 3',5'-cyclic GMP + H2O = GMP + H(+). The catalysed reaction is 3',5'-cyclic AMP + H2O = AMP + H(+). Its activity is regulated as follows. Type I PDE are activated by the binding of calmodulin in the presence of Ca(2+). Its function is as follows. Calcium/calmodulin-dependent cyclic nucleotide phosphodiesterase with a dual specificity for the second messengers cGMP and cAMP, which are key regulators of many important physiological processes. Has a higher efficiency with cGMP compared to cAMP. The sequence is that of Dual specificity calcium/calmodulin-dependent 3',5'-cyclic nucleotide phosphodiesterase 1A from Homo sapiens (Human).